Here is a 511-residue protein sequence, read N- to C-terminus: Chromosomal replication initiator protein DnaA (511 aa).

Residues 1–87 (MSVELWQQCV…IGSKRSSAPR (87 aa)) form a domain I, interacts with DnaA modulators region. The domain II stretch occupies residues 87-174 (RAAPNAPLAA…QVEGALKHTS (88 aa)). Residues 133-160 (VATHDEPSRDSFDPMAGASSQQAPARAE) form a disordered region. Residues 134–144 (ATHDEPSRDSF) are compositionally biased toward basic and acidic residues. The segment at 175–391 (YLNRTFTFEN…GALKRVIAHS (217 aa)) is domain III, AAA+ region. Positions 219, 221, 222, and 223 each coordinate ATP. The interval 392–511 (HFMGRDITIE…YKNLLRTLTT (120 aa)) is domain IV, binds dsDNA.

It belongs to the DnaA family. Oligomerizes as a right-handed, spiral filament on DNA at oriC.

The protein localises to the cytoplasm. Its function is as follows. Plays an essential role in the initiation and regulation of chromosomal replication. ATP-DnaA binds to the origin of replication (oriC) to initiate formation of the DNA replication initiation complex once per cell cycle. Binds the DnaA box (a 9 base pair repeat at the origin) and separates the double-stranded (ds)DNA. Forms a right-handed helical filament on oriC DNA; dsDNA binds to the exterior of the filament while single-stranded (ss)DNA is stabiized in the filament's interior. The ATP-DnaA-oriC complex binds and stabilizes one strand of the AT-rich DNA unwinding element (DUE), permitting loading of DNA polymerase. After initiation quickly degrades to an ADP-DnaA complex that is not apt for DNA replication. Binds acidic phospholipids. The chain is Chromosomal replication initiator protein DnaA from Pseudomonas syringae pv. tomato (strain ATCC BAA-871 / DC3000).